The primary structure comprises 1236 residues: ESX-4 secretion system protein EccC4 (1236 aa).

Transmembrane regions (helical) follow at residues 32–52 (LLPVVMSVATVGVMVTVFLPG) and 59–79 (PTFLAFPMMMLVSLVVTAVTG). 3 consecutive FtsK domains span residues 407–607 (GTAV…SESR), 747–936 (RVPL…ADSE), and 1018–1201 (GQPV…DEGA). Residues 430–437 (GATGSGKS), 765–772 (GAPQTGKS), and 1035–1042 (GDNECGKT) each bind ATP.

In terms of assembly, part of the ESX-4 / type VII secretion system (T7SS), which is composed of cytosolic and membrane components.

The protein localises to the cell membrane. This chain is ESX-4 secretion system protein EccC4 (eccC4), found in Mycobacterium tuberculosis (strain ATCC 25618 / H37Rv).